A 226-amino-acid chain; its full sequence is MTSWPPRIVIRRSSGLRTMESALVRSGLGPVAGVDEAGRGACAGPLVVAACVLAPKPYPALARLDDSKKLTERTREELFPAITRLAVAWSVVSFPADEVDRMGVHVANIEGMRRAVAGLTTTPGYVLTDGFRVPGLPAPSLPVIGGDAAAACIAAASVLAKVSRDRVMVAMDETHPGYGFAIHKGYNTPAHLAALEVLGPCPEHRRSWSNVAALLHRVDNSSGSAR.

One can recognise an RNase H type-2 domain in the interval Gly29–Asn220. A divalent metal cation is bound by residues Asp35, Glu36, and Asp129.

It belongs to the RNase HII family. Requires Mn(2+) as cofactor. Mg(2+) serves as cofactor.

The protein localises to the cytoplasm. It carries out the reaction Endonucleolytic cleavage to 5'-phosphomonoester.. Functionally, endonuclease that specifically degrades the RNA of RNA-DNA hybrids. The protein is Ribonuclease HII of Rhodococcus opacus (strain B4).